The following is a 346-amino-acid chain: Biotin synthase (346 aa).

Residues 38-256 (RQVQVSTLLS…IAVARIMMPT (219 aa)) form the Radical SAM core domain. Residues Cys53, Cys57, and Cys60 each contribute to the [4Fe-4S] cluster site. Residues Cys97, Cys128, Cys188, and Arg260 each coordinate [2Fe-2S] cluster.

It belongs to the radical SAM superfamily. Biotin synthase family. Homodimer. It depends on [4Fe-4S] cluster as a cofactor. The cofactor is [2Fe-2S] cluster.

The catalysed reaction is (4R,5S)-dethiobiotin + (sulfur carrier)-SH + 2 reduced [2Fe-2S]-[ferredoxin] + 2 S-adenosyl-L-methionine = (sulfur carrier)-H + biotin + 2 5'-deoxyadenosine + 2 L-methionine + 2 oxidized [2Fe-2S]-[ferredoxin]. It participates in cofactor biosynthesis; biotin biosynthesis; biotin from 7,8-diaminononanoate: step 2/2. Functionally, catalyzes the conversion of dethiobiotin (DTB) to biotin by the insertion of a sulfur atom into dethiobiotin via a radical-based mechanism. This is Biotin synthase from Escherichia coli (strain SE11).